A 589-amino-acid chain; its full sequence is ATP-dependent lipid A-core flippase (589 aa).

5 consecutive transmembrane segments (helical) span residues 29–49 (WLLV…STFL), 68–88 (ALWL…AGYI), 157–177 (VIGA…AILL), 254–274 (LSSA…LLIA), and 283–303 (LSPG…PALK). One can recognise an ABC transmembrane type-1 domain in the interval 32–314 (VVAACGALLE…LTNVQNMLQS (283 aa)). The 237-residue stretch at 346–582 (IEFRGITARY…DGLYAYLYSM (237 aa)) folds into the ABC transporter domain. 380 to 387 (GRSGSGKS) serves as a coordination point for ATP.

It belongs to the ABC transporter superfamily. Lipid exporter (TC 3.A.1.106) family. Homodimer.

It is found in the cell inner membrane. The enzyme catalyses ATP + H2O + lipid A-core oligosaccharideSide 1 = ADP + phosphate + lipid A-core oligosaccharideSide 2.. Involved in lipopolysaccharide (LPS) biosynthesis. Translocates lipid A-core from the inner to the outer leaflet of the inner membrane. Transmembrane domains (TMD) form a pore in the inner membrane and the ATP-binding domain (NBD) is responsible for energy generation. The protein is ATP-dependent lipid A-core flippase of Xylella fastidiosa (strain 9a5c).